The sequence spans 113 residues: U11-theraphotoxin-Hhn1f (113 aa).

The first 21 residues, methionine 1–alanine 21, serve as a signal peptide directing secretion. Positions aspartate 22–arginine 74 are excised as a propeptide. Residues glutamate 61–aspartate 83 form a disordered region. Intrachain disulfides connect cysteine 75-cysteine 90, cysteine 82-cysteine 95, and cysteine 89-cysteine 110.

This sequence belongs to the neurotoxin 14 (magi-1) family. 01 (HNTX-16) subfamily. In terms of tissue distribution, expressed by the venom gland.

The protein localises to the secreted. Its function is as follows. Probable ion channel inhibitor. The chain is U11-theraphotoxin-Hhn1f from Cyriopagopus hainanus (Chinese bird spider).